Here is a 393-residue protein sequence, read N- to C-terminus: Dual-specificity RNA methyltransferase RlmN (393 aa).

The Proton acceptor role is filled by Glu114. The 240-residue stretch at 120–359 (EDDRATLCVS…VIVRKTRGDD (240 aa)) folds into the Radical SAM core domain. The cysteines at positions 127 and 364 are disulfide-linked. [4Fe-4S] cluster-binding residues include Cys134, Cys138, and Cys141. S-adenosyl-L-methionine contacts are provided by residues 188–189 (GE), Ser220, 242–244 (SLH), and Asn321. Cys364 serves as the catalytic S-methylcysteine intermediate.

It belongs to the radical SAM superfamily. RlmN family. It depends on [4Fe-4S] cluster as a cofactor.

Its subcellular location is the cytoplasm. It catalyses the reaction adenosine(2503) in 23S rRNA + 2 reduced [2Fe-2S]-[ferredoxin] + 2 S-adenosyl-L-methionine = 2-methyladenosine(2503) in 23S rRNA + 5'-deoxyadenosine + L-methionine + 2 oxidized [2Fe-2S]-[ferredoxin] + S-adenosyl-L-homocysteine. It carries out the reaction adenosine(37) in tRNA + 2 reduced [2Fe-2S]-[ferredoxin] + 2 S-adenosyl-L-methionine = 2-methyladenosine(37) in tRNA + 5'-deoxyadenosine + L-methionine + 2 oxidized [2Fe-2S]-[ferredoxin] + S-adenosyl-L-homocysteine. Its function is as follows. Specifically methylates position 2 of adenine 2503 in 23S rRNA and position 2 of adenine 37 in tRNAs. m2A2503 modification seems to play a crucial role in the proofreading step occurring at the peptidyl transferase center and thus would serve to optimize ribosomal fidelity. The chain is Dual-specificity RNA methyltransferase RlmN from Actinobacillus pleuropneumoniae serotype 3 (strain JL03).